Here is a 381-residue protein sequence, read N- to C-terminus: Alkanesulfonate monooxygenase (381 aa).

The protein belongs to the SsuD family. In terms of assembly, homotetramer.

It catalyses the reaction an alkanesulfonate + FMNH2 + O2 = an aldehyde + FMN + sulfite + H2O + 2 H(+). Catalyzes the desulfonation of aliphatic sulfonates. This is Alkanesulfonate monooxygenase from Escherichia coli O81 (strain ED1a).